Here is a 104-residue protein sequence, read N- to C-terminus: Ribonuclease P protein component 4 (104 aa).

Zn(2+) is bound by residues Cys57, Cys60, Cys83, and Cys86.

The protein belongs to the eukaryotic/archaeal RNase P protein component 4 family. Consists of a catalytic RNA component and at least 4-5 protein subunits. Zn(2+) serves as cofactor.

The protein resides in the cytoplasm. The catalysed reaction is Endonucleolytic cleavage of RNA, removing 5'-extranucleotides from tRNA precursor.. Its function is as follows. Part of ribonuclease P, a protein complex that generates mature tRNA molecules by cleaving their 5'-ends. The sequence is that of Ribonuclease P protein component 4 from Saccharolobus islandicus (strain M.16.27) (Sulfolobus islandicus).